The following is a 398-amino-acid chain: tRNA(Ile)-lysidine synthase (398 aa).

An ATP-binding site is contributed by 25-30 (SGGVDS).

This sequence belongs to the tRNA(Ile)-lysidine synthase family.

It localises to the cytoplasm. The catalysed reaction is cytidine(34) in tRNA(Ile2) + L-lysine + ATP = lysidine(34) in tRNA(Ile2) + AMP + diphosphate + H(+). Functionally, ligates lysine onto the cytidine present at position 34 of the AUA codon-specific tRNA(Ile) that contains the anticodon CAU, in an ATP-dependent manner. Cytidine is converted to lysidine, thus changing the amino acid specificity of the tRNA from methionine to isoleucine. In Francisella tularensis subsp. tularensis (strain SCHU S4 / Schu 4), this protein is tRNA(Ile)-lysidine synthase.